Consider the following 170-residue polypeptide: Probable phospholipid hydroperoxide glutathione peroxidase (170 aa).

Cysteine 44 is an active-site residue.

The protein belongs to the glutathione peroxidase family.

Its subcellular location is the cytoplasm. It catalyses the reaction a hydroperoxy polyunsaturated fatty acid + 2 glutathione = a hydroxy polyunsaturated fatty acid + glutathione disulfide + H2O. In terms of biological role, protects cells and enzymes from oxidative damage, by catalyzing the reduction of hydrogen peroxide, lipid peroxides and organic hydroperoxide, by glutathione. This chain is Probable phospholipid hydroperoxide glutathione peroxidase (GPXMC1), found in Mesembryanthemum crystallinum (Common ice plant).